The sequence spans 771 residues: Dol-P-Glc:Glc(2)Man(9)GlcNAc(2)-PP-Dol alpha-1,2-glucosyltransferase (771 aa).

The next 7 membrane-spanning stretches (helical) occupy residues 45–65, 160–180, 182–202, 221–241, 293–313, 326–346, and 357–377; these read FITA…LALV, VSFY…IFFF, GLYY…WNHL, VVLG…VVVY, VDMA…IAAL, HITI…VVLG, and LPQM…LLIP. Positions 392 to 449 are disordered; the sequence is TPTPSHTTTKDPGRSSWRFTKPSITSKKSSTTKPPQRSGPTPASSSSSSSSFSPDTNS. 2 stretches are compositionally biased toward low complexity: residues 411–426 and 435–449; these read TKPS…TKPP and SSSS…DTNS. Asparagine 448 is a glycosylation site (N-linked (GlcNAc...) asparagine). A run of 2 helical transmembrane segments spans residues 469–489 and 503–525; these read PFYL…NTII and YIFR…AYTL. The segment covering 584 to 593 has biased composition (basic and acidic residues); it reads QKNIKDKQKE. The interval 584–605 is disordered; it reads QKNIKDKQKEVEEEEEEEEKED. Positions 594 to 604 are enriched in acidic residues; that stretch reads VEEEEEEEEKE. 2 helical membrane passes run 631-651 and 656-676; these read TSTV…APLV and FILP…SSSL. Positions 682-708 are disordered; that stretch reads SSSFASSTTESGNGDGNDAATAARQQQ. A helical membrane pass occupies residues 728–748; it reads LALETVWFLAINIGTMYMFLF.

It belongs to the ALG10 glucosyltransferase family.

It is found in the endoplasmic reticulum membrane. It catalyses the reaction an alpha-D-Glc-(1-&gt;3)-alpha-D-Glc-(1-&gt;3)-alpha-D-Man-(1-&gt;2)-alpha-D-Man-(1-&gt;2)-alpha-D-Man-(1-&gt;3)-[alpha-D-Man-(1-&gt;2)-alpha-D-Man-(1-&gt;3)-[alpha-D-Man-(1-&gt;2)-alpha-D-Man-(1-&gt;6)]-alpha-D-Man-(1-&gt;6)]-beta-D-Man-(1-&gt;4)-beta-D-GlcNAc-(1-&gt;4)-alpha-D-GlcNAc-diphospho-di-trans,poly-cis-dolichol + a di-trans,poly-cis-dolichyl beta-D-glucosyl phosphate = a alpha-D-Glc-(1-&gt;2)-alpha-D-Glc-(1-&gt;3)-alpha-D-Glc-(1-&gt;3)-alpha-D-Man-(1-&gt;2)-alpha-D-Man-(1-&gt;2)-alpha-D-Man-(1-&gt;3)-[alpha-D-Man-(1-&gt;2)-alpha-D-Man-(1-&gt;3)-[alpha-D-Man-(1-&gt;2)-alpha-D-Man-(1-&gt;6)]-alpha-D-Man-(1-&gt;6)]-beta-D-Man-(1-&gt;4)-beta-D-GlcNAc-(1-&gt;4)-alpha-D-GlcNAc-diphospho-di-trans,poly-cis-dolichol + a di-trans,poly-cis-dolichyl phosphate + H(+). The protein operates within protein modification; protein glycosylation. In terms of biological role, dol-P-Glc:Glc(2)Man(9)GlcNAc(2)-PP-Dol alpha-1,2-glucosyltransferase that operates in the biosynthetic pathway of dolichol-linked oligosaccharides, the glycan precursors employed in protein asparagine (N)-glycosylation. The assembly of dolichol-linked oligosaccharides begins on the cytosolic side of the endoplasmic reticulum membrane and finishes in its lumen. The sequential addition of sugars to dolichol pyrophosphate produces dolichol-linked oligosaccharides containing fourteen sugars, including two GlcNAcs, nine mannoses and three glucoses. Once assembled, the oligosaccharide is transferred from the lipid to nascent proteins by oligosaccharyltransferases. In the lumen of the endoplasmic reticulum, adds the third and last glucose residue from dolichyl phosphate glucose (Dol-P-Glc) onto the lipid-linked oligosaccharide intermediate Glc(2)Man(9)GlcNAc(2)-PP-Dol to produce Glc(3)Man(9)GlcNAc(2)-PP-Dol. This is Dol-P-Glc:Glc(2)Man(9)GlcNAc(2)-PP-Dol alpha-1,2-glucosyltransferase (alg-10) from Neurospora crassa (strain ATCC 24698 / 74-OR23-1A / CBS 708.71 / DSM 1257 / FGSC 987).